The following is a 228-amino-acid chain: MTDQTYCDRLVQDTPFLTGHGRLSEQQVDRIILQLNRYYPQILTNKEAEKFRNPKASLRVRLCDLLSHLQRSGERDCQEFYRALYIHAQPLHSRLPSRHALRKFHITNHACLVLARGGHPSLPLMAWMSSMTTQVCCSPGLASPLASAPPQRPPSGPEGRVWQAQAVQMLVSVSHFLPLPPSLSHGSFHTAWGILYVHSCPSFSNLIPRGSLHVCVDSNLVPTAAWRS.

Cys-7 and Cys-77 form a disulfide bridge. The CARD domain occupies 8–99; the sequence is DRLVQDTPFL…PLHSRLPSRH (92 aa). Val-113 is modified (phosphoserine).

In terms of assembly, associates with BCL10 by CARD-CARD interaction. Expressed in ovary, testis, placenta, skeletal muscle, kidney, lung, heart and liver (at protein level). Expressed in thymus and brain.

It is found in the nucleus. The protein localises to the endoplasmic reticulum membrane. It localises to the mitochondrion membrane. Functionally, plays a role in inhibiting the effects of BCL10-induced activation of NF-kappa-B. May inhibit the phosphorylation of BCL10 in a CARD-dependent manner. The sequence is that of Caspase recruitment domain-containing protein 19 (CARD19) from Homo sapiens (Human).